A 207-amino-acid polypeptide reads, in one-letter code: Large ribosomal subunit protein bL25 (207 aa).

This sequence belongs to the bacterial ribosomal protein bL25 family. CTC subfamily. Part of the 50S ribosomal subunit; part of the 5S rRNA/L5/L18/L25 subcomplex. Contacts the 5S rRNA. Binds to the 5S rRNA independently of L5 and L18.

Its function is as follows. This is one of the proteins that binds to the 5S RNA in the ribosome where it forms part of the central protuberance. The protein is Large ribosomal subunit protein bL25 of Rhizorhabdus wittichii (strain DSM 6014 / CCUG 31198 / JCM 15750 / NBRC 105917 / EY 4224 / RW1) (Sphingomonas wittichii).